A 397-amino-acid chain; its full sequence is MGNKKIVLAYSGGLDTSVAVKWLTDKGFDVIAACMDVGEGKDLNFIHDKALQVGAVESVVLDCKAEFAEIFVGAALKGNLMYENKYPLVSALSRPLIAKKLVKVAKEKGATAIAHGCTGKGNDQVRFEVAIHSLAPELEVIAPVREWHWAREEEIEYANQNGVPIPADLDNPYSIDMNLWGRAIEAGVLENPWNTCPEDAFFMTNSVEDAPNEPEFIEVEFKEGLPIALNGKIMELHEIIKEVNIIAGKHGVGRIDHIENRLVGIKSREFYECPAAITLLKAHKDLEDLTFVRELAHFKPVLENELANLIYNGLWFNPATKALIAYLDETQKVVNGIVRIKLYKGLATPIGRKSTNSLYSEKLATYTAADEFDQAAAVGFIKLWGLPTQVNAQVNLK.

ATP is bound at residue 9–17; it reads AYSGGLDTS. Y86 contributes to the L-citrulline binding site. G116 lines the ATP pocket. T118, N122, and D123 together coordinate L-aspartate. An L-citrulline-binding site is contributed by N122. 4 residues coordinate L-citrulline: R126, S174, E259, and Y271.

This sequence belongs to the argininosuccinate synthase family. Type 1 subfamily. Homotetramer.

The protein resides in the cytoplasm. It carries out the reaction L-citrulline + L-aspartate + ATP = 2-(N(omega)-L-arginino)succinate + AMP + diphosphate + H(+). It participates in amino-acid biosynthesis; L-arginine biosynthesis; L-arginine from L-ornithine and carbamoyl phosphate: step 2/3. The protein is Argininosuccinate synthase of Lactococcus lactis subsp. cremoris (strain MG1363).